Reading from the N-terminus, the 548-residue chain is Tau-cadinol synthase (548 aa).

D303 and D307 together coordinate Mg(2+). Residues D303, D307, and R443 each contribute to the substrate site. The DDXXD motif motif lies at 303 to 307 (DDTYD).

It belongs to the terpene synthase family. As to quaternary structure, monomer. The cofactor is Mg(2+). It depends on Mn(2+) as a cofactor. In terms of tissue distribution, constitutively expressed in aerial tissues, but barely observed in roots.

The protein resides in the cytoplasm. The enzyme catalyses (2E,6E)-farnesyl diphosphate + H2O = tau-cadinol + diphosphate. Its pathway is secondary metabolite biosynthesis; terpenoid biosynthesis. Functionally, sesquiterpene synthase that catalyzes the formation of a blend of sesquiterpenes and sesquiterpenoid alcohols. Converts farnesyl diphosphate to tau-cadinol. The chain is Tau-cadinol synthase from Zea mays (Maize).